Consider the following 147-residue polypeptide: Cyclic di-AMP receptor B (147 aa).

In terms of domain architecture, CBS spans 18–78 (MIEADKVAHV…SIFGLERIEF (61 aa)). 3',3'-c-di-AMP-binding residues include K23, A25, T46, A47, and R131.

Homodimer. Forms a homodimer with a parallel, head-to-head assembly of the monomers. Under conditions of potassium starvation and corresponding low c-di-AMP levels, apo-DarB specifically interacts with the N-terminal region of the RelA. Under the same conditions, apo-DarB also specifically interacts with the C-terminal part of the pyruvate carboxylase.

Its activity is regulated as follows. Binds c-di-AMP. Binding of c-di-AMP to DarB inhibits the interaction with RelA and PYC. Its function is as follows. Involved in the c-di-AMP-dependent regulation of the bacterial stringent response. Modulates the activities of at least two enzymes under conditions of potassium limitation. Apo-DarB regulates the activity of the GTP pyrophosphokinase RelA by interacting directly with RelA, leading to stimulation of (p)ppGpp synthesis and induction of the stringent response. Apo-DarB also regulates pyruvate carboxylase (PYC) at two levels: directly at the protein level by binding to the enzyme and stimulating the synthesis of oxaloacetate and indirectly, by interaction with RelA, which leads to activation of the stringent response and to the increased expression of the pycA gene. Stimulation of these enzymes by DarB is prevented in the presence of cyclic di-AMP (c-di-AMP). The chain is Cyclic di-AMP receptor B from Bacillus subtilis (strain 168).